A 269-amino-acid polypeptide reads, in one-letter code: Ribosomal RNA small subunit methyltransferase J (269 aa).

S-adenosyl-L-methionine-binding positions include 125–126 (ER) and aspartate 179.

This sequence belongs to the methyltransferase superfamily. RsmJ family.

The protein localises to the cytoplasm. The enzyme catalyses guanosine(1516) in 16S rRNA + S-adenosyl-L-methionine = N(2)-methylguanosine(1516) in 16S rRNA + S-adenosyl-L-homocysteine + H(+). Specifically methylates the guanosine in position 1516 of 16S rRNA. The chain is Ribosomal RNA small subunit methyltransferase J from Pseudomonas syringae pv. syringae (strain B728a).